A 590-amino-acid chain; its full sequence is Leucine-rich repeat transmembrane neuronal protein 4 (590 aa).

The N-terminal stretch at 1–30 is a signal peptide; it reads MGFRLITQLKGMSVLLVLFPTLLLVMLTGA. Residues 31 to 59 form the LRRNT domain; that stretch reads QRACPKNCRCDGKIVYCESHAFADIPENI. The Extracellular segment spans residues 31-424; it reads QRACPKNCRC…HEYEHVSFHK (394 aa). N58 carries N-linked (GlcNAc...) asparagine glycosylation. LRR repeat units follow at residues 60–83, 84–107, 108–131, 132–155, 157–179, 180–203, 205–227, 228–251, 252–275, and 276–299; these read SGGS…QFAG, LNQL…AFQG, IRRL…TFHP, VPNL…QFKG, RKLI…VFQD, CRNL…AFAG, LKLK…HFPR, LFNL…LTWT, WSSL…TFKC, and LPNL…TVNA. An N-linked (GlcNAc...) asparagine glycan is attached at N126. N291 carries an N-linked (GlcNAc...) asparagine glycan. One can recognise an LRRCT domain in the interval 311–362; sequence NMWECSRSICPLFYWLKNFKGNKESTMICAGPKHIQGEKVSDAVETYNICSD. The chain crosses the membrane as a helical span at residues 425 to 445; it reads IIAGSVALFLSVAMILLVIYV. Topologically, residues 446–590 are cytoplasmic; sequence SWKRYPASMK…PAIYLERITN (145 aa).

It belongs to the LRRTM family. Peripherally associated with AMPAR complex. AMPAR complex consists of an inner core made of 4 pore-forming GluA/GRIA proteins (GRIA1, GRIA2, GRIA3 and GRIA4) and 4 major auxiliary subunits arranged in a twofold symmetry. One of the two pairs of distinct binding sites is occupied either by CNIH2, CNIH3 or CACNG2, CACNG3. The other harbors CACNG2, CACNG3, CACNG4, CACNG8 or GSG1L. This inner core of AMPAR complex is complemented by outer core constituents binding directly to the GluA/GRIA proteins at sites distinct from the interaction sites of the inner core constituents. Outer core constituents include at least PRRT1, PRRT2, CKAMP44/SHISA9, FRRS1L and NRN1. The proteins of the inner and outer core serve as a platform for other, more peripherally associated AMPAR constituents, including LRRTM4. Alone or in combination, these auxiliary subunits control the gating and pharmacology of the AMPAR complex and profoundly impact their biogenesis and protein processing. In terms of tissue distribution, expressed in the brain (at protein level).

It localises to the cell membrane. Its subcellular location is the postsynaptic cell membrane. Its function is as follows. May play a role in the development and maintenance of the nervous system. Exhibits strong synaptogenic activity, restricted to excitatory presynaptic differentiation. The polypeptide is Leucine-rich repeat transmembrane neuronal protein 4 (Lrrtm4) (Rattus norvegicus (Rat)).